The sequence spans 263 residues: MARGPKKHLKRVAAPKHWMLDKLTGVFAPRPSTGPHKLRECLPLIVFLRNRLKYALTGDEVKKICMQRFIKIDGKVRVDVTYPAGFMDVISIEKTGEHFRLVYDTKGRFAVHRITVEEAKYKLCKVRKITVGVKGIPHLVTHDARTIRYPDPVIKVNDTVQIDLGTGKIINFIKFDTGNLCMVIGGANLGRVGVITNRERHPGSFDVVHVKDANGNSFATRISNIFVIGNGNKPWISLPRGKGIRLTVAEERDKRLATKQSSG.

In terms of domain architecture, S4 RNA-binding spans 42–104 (LPLIVFLRNR…TGEHFRLVYD (63 aa)).

The protein belongs to the eukaryotic ribosomal protein eS4 family.

This is Small ribosomal subunit protein eS4 (RPS4Y1) from Gorilla gorilla gorilla (Western lowland gorilla).